The following is a 160-amino-acid chain: Sec-independent protein translocase protein TatB (160 aa).

The chain crosses the membrane as a helical span at residues 1-21; the sequence is MIDLGVSKIALIGAVALIVIG. 2 disordered regions span residues 70–100 and 133–160; these read ARDV…STAT and RSGV…SSSF. Polar residues predominate over residues 89–100; it reads SDATGSDASTAT.

It belongs to the TatB family. In terms of assembly, the Tat system comprises two distinct complexes: a TatABC complex, containing multiple copies of TatA, TatB and TatC subunits, and a separate TatA complex, containing only TatA subunits. Substrates initially bind to the TatABC complex, which probably triggers association of the separate TatA complex to form the active translocon.

The protein localises to the cell inner membrane. In terms of biological role, part of the twin-arginine translocation (Tat) system that transports large folded proteins containing a characteristic twin-arginine motif in their signal peptide across membranes. Together with TatC, TatB is part of a receptor directly interacting with Tat signal peptides. TatB may form an oligomeric binding site that transiently accommodates folded Tat precursor proteins before their translocation. The protein is Sec-independent protein translocase protein TatB of Polaromonas sp. (strain JS666 / ATCC BAA-500).